The following is a 355-amino-acid chain: UDP-3-O-acylglucosamine N-acyltransferase (355 aa).

The active-site Proton acceptor is His-252.

The protein belongs to the transferase hexapeptide repeat family. LpxD subfamily. As to quaternary structure, homotrimer.

The catalysed reaction is a UDP-3-O-[(3R)-3-hydroxyacyl]-alpha-D-glucosamine + a (3R)-hydroxyacyl-[ACP] = a UDP-2-N,3-O-bis[(3R)-3-hydroxyacyl]-alpha-D-glucosamine + holo-[ACP] + H(+). Its pathway is bacterial outer membrane biogenesis; LPS lipid A biosynthesis. Its function is as follows. Catalyzes the N-acylation of UDP-3-O-acylglucosamine using 3-hydroxyacyl-ACP as the acyl donor. Is involved in the biosynthesis of lipid A, a phosphorylated glycolipid that anchors the lipopolysaccharide to the outer membrane of the cell. The protein is UDP-3-O-acylglucosamine N-acyltransferase of Polynucleobacter asymbioticus (strain DSM 18221 / CIP 109841 / QLW-P1DMWA-1) (Polynucleobacter necessarius subsp. asymbioticus).